A 156-amino-acid polypeptide reads, in one-letter code: Cyanate hydratase (156 aa).

Residues Arg96, Glu99, and Ser122 contribute to the active site.

This sequence belongs to the cyanase family.

It carries out the reaction cyanate + hydrogencarbonate + 3 H(+) = NH4(+) + 2 CO2. Functionally, catalyzes the reaction of cyanate with bicarbonate to produce ammonia and carbon dioxide. The protein is Cyanate hydratase of Burkholderia lata (strain ATCC 17760 / DSM 23089 / LMG 22485 / NCIMB 9086 / R18194 / 383).